The following is a 162-amino-acid chain: Mediator of RNA polymerase II transcription subunit 31 (162 aa).

Residues 131–162 form a disordered region; the sequence is VQGGQNVEAGDTGHNEGDQGTQQDKENIALKT. Positions 141–162 are enriched in basic and acidic residues; it reads DTGHNEGDQGTQQDKENIALKT.

This sequence belongs to the Mediator complex subunit 31 family. Component of the Mediator complex.

The protein resides in the nucleus. Its function is as follows. Component of the Mediator complex, a coactivator involved in the regulated transcription of nearly all RNA polymerase II-dependent genes. Mediator functions as a bridge to convey information from gene-specific regulatory proteins to the basal RNA polymerase II transcription machinery. Mediator is recruited to promoters by direct interactions with regulatory proteins and serves as a scaffold for the assembly of a functional preinitiation complex with RNA polymerase II and the general transcription factors. In Aspergillus fumigatus (strain ATCC MYA-4609 / CBS 101355 / FGSC A1100 / Af293) (Neosartorya fumigata), this protein is Mediator of RNA polymerase II transcription subunit 31 (soh1).